The following is a 181-amino-acid chain: MTTETLSLIKSSIKSIPDYPKKGILFRDVTSLLEDAQAYQATIQLLVEKYKDMGFTKVVGTEARGFLFGAPLALELGVGFVPVRKPGKLPRQTVAQSYELEYGTDTLEIHVDAIKPGDKVLVVDDLLATGGTIEATTKLIRQLGGEVEHAAFVINLPEIGGDKRLEGLGLQVYSICEFEGH.

The protein belongs to the purine/pyrimidine phosphoribosyltransferase family. As to quaternary structure, homodimer.

The protein localises to the cytoplasm. It carries out the reaction AMP + diphosphate = 5-phospho-alpha-D-ribose 1-diphosphate + adenine. It participates in purine metabolism; AMP biosynthesis via salvage pathway; AMP from adenine: step 1/1. Functionally, catalyzes a salvage reaction resulting in the formation of AMP, that is energically less costly than de novo synthesis. The chain is Adenine phosphoribosyltransferase from Vibrio cholerae serotype O1 (strain ATCC 39541 / Classical Ogawa 395 / O395).